A 307-amino-acid polypeptide reads, in one-letter code: Aspartate carbamoyltransferase catalytic subunit (307 aa).

R54 and T55 together coordinate carbamoyl phosphate. Position 83 (K83) interacts with L-aspartate. Carbamoyl phosphate is bound by residues R104, H132, and Q135. L-aspartate is bound by residues R165 and R228. Positions 267 and 268 each coordinate carbamoyl phosphate.

Belongs to the aspartate/ornithine carbamoyltransferase superfamily. ATCase family. In terms of assembly, heterododecamer (2C3:3R2) of six catalytic PyrB chains organized as two trimers (C3), and six regulatory PyrI chains organized as three dimers (R2).

The enzyme catalyses carbamoyl phosphate + L-aspartate = N-carbamoyl-L-aspartate + phosphate + H(+). Its pathway is pyrimidine metabolism; UMP biosynthesis via de novo pathway; (S)-dihydroorotate from bicarbonate: step 2/3. In terms of biological role, catalyzes the condensation of carbamoyl phosphate and aspartate to form carbamoyl aspartate and inorganic phosphate, the committed step in the de novo pyrimidine nucleotide biosynthesis pathway. The protein is Aspartate carbamoyltransferase catalytic subunit of Clostridium perfringens (strain SM101 / Type A).